We begin with the raw amino-acid sequence, 318 residues long: MQVTFLGTSSGVPTRARNVSAVALRLPQRAELWLFDCGEGTQHQFLRSDLRLSQLRRVFVSHMHGDHVFGLPGLLASLGLSGNSNGVDLYGPDPLESYLQGVLRNSSTRIGYPLKVHRVRDAAEQNLIVFEDKDILVRCTPLTHRVPAYAYRVEQKPKPGHFNLERAQSLGIPPGPVYAALKRGEQVSLDDGRVVDGRDFCGPDRPGASIVFCTDTVFSEAAVSLAAGADLLIHEATFAHSEAEMAYQKQHSTSTMAAQTAAEAGVGKLVLTHLSPRYAPGNPVTPNDLLREAQAIFSNTILAKDFLSFEVAPRCNSS.

The Zn(2+) site is built by His62, His64, Asp66, His67, His144, Asp215, and His273. Residue Asp66 is the Proton acceptor of the active site.

This sequence belongs to the RNase Z family. In terms of assembly, homodimer. The cofactor is Zn(2+).

It catalyses the reaction Endonucleolytic cleavage of RNA, removing extra 3' nucleotides from tRNA precursor, generating 3' termini of tRNAs. A 3'-hydroxy group is left at the tRNA terminus and a 5'-phosphoryl group is left at the trailer molecule.. Its function is as follows. Zinc phosphodiesterase, which displays some tRNA 3'-processing endonuclease activity. Probably involved in tRNA maturation, by removing a 3'-trailer from precursor tRNA. The polypeptide is Ribonuclease Z (Prochlorococcus marinus (strain MIT 9313)).